We begin with the raw amino-acid sequence, 445 residues long: Exodeoxyribonuclease 7 large subunit (445 aa).

It belongs to the XseA family. Heterooligomer composed of large and small subunits.

The protein resides in the cytoplasm. The enzyme catalyses Exonucleolytic cleavage in either 5'- to 3'- or 3'- to 5'-direction to yield nucleoside 5'-phosphates.. Functionally, bidirectionally degrades single-stranded DNA into large acid-insoluble oligonucleotides, which are then degraded further into small acid-soluble oligonucleotides. This chain is Exodeoxyribonuclease 7 large subunit, found in Delftia acidovorans (strain DSM 14801 / SPH-1).